The following is a 210-amino-acid chain: Vacuolar protein sorting-associated protein 28 homolog 2 (210 aa).

A VPS28 N-terminal domain is found at methionine 1–glutamate 99. In terms of domain architecture, VPS28 C-terminal spans serine 109 to leucine 205.

It belongs to the VPS28 family. In terms of assembly, component of the endosomal sorting required for transport complex I (ESCRT-I), composed of ELC, VPS28 and VPS37. Interacts with ELC.

The protein resides in the endosome. Its function is as follows. Component of the ESCRT-I complex (endosomal sorting complex required for transport I), a regulator of vesicular trafficking process. Required for the sorting of endocytic ubiquitinated cargos into multivesicular bodies (MVBs). Mediates the association to the ESCRT-0 complex. This is Vacuolar protein sorting-associated protein 28 homolog 2 (VPS28-2) from Arabidopsis thaliana (Mouse-ear cress).